The primary structure comprises 1793 residues: uncharacterized protein (1793 aa).

3 disordered regions span residues 156-189 (ARQA…ASSQ), 204-362 (QRES…PPKV), and 407-505 (ASFG…SGAA). Residues 166 to 175 (SSAQDSQELK) show a composition bias toward polar residues. Residues 227–237 (SPKEKAQDEPS) show a composition bias toward basic and acidic residues. The segment covering 238–247 (SKTPSPQNNP) has biased composition (polar residues). Residues 248 to 258 (ASSQLSRSQHS) show a composition bias toward low complexity. Basic and acidic residues predominate over residues 277–288 (KAEEDGLSKMED). Over residues 289 to 307 (STTSTGALATSSSSLGFES) the composition is skewed to low complexity. The segment covering 317-342 (AVGGEGEKISGGGGGGKGGGGGGAGD) has biased composition (gly residues). Positions 434-450 (STTPSTNTTRTPSPTSS) are enriched in low complexity. Positions 463-476 (DTSSTEVGSGPSDS) are enriched in polar residues. The span at 485–505 (PGTAPLTEPLPETPEAASGAA) shows a compositional bias: low complexity. The residue at position 733 (Thr733) is a Phosphothreonine. Disordered stretches follow at residues 757-809 (RSES…SKFA), 829-917 (MERG…FTDG), 1090-1147 (RDIR…GSGS), 1161-1187 (QRED…NSSS), 1229-1249 (QKTP…ATKP), 1408-1465 (TGGV…KSNS), and 1482-1567 (GELL…PLPF). Composition is skewed to basic and acidic residues over residues 829-839 (MERGEVMDTSH) and 846-872 (KETE…HSEA). Positions 1113–1123 (KGSGDSSDKGS) are enriched in low complexity. The span at 1161–1174 (QREDSMDREPRESM) shows a compositional bias: basic and acidic residues. Ser1187 carries the post-translational modification Phosphoserine. Residues 1231-1246 (TPEKLKEEEVKEEGKA) are compositionally biased toward basic and acidic residues. Over residues 1513-1528 (SQVPSSSKGSQVSGTS) the composition is skewed to low complexity. Residues 1546-1555 (PPGPQSPEHP) are compositionally biased toward pro residues. Arg1774 is modified (omega-N-methylarginine).

In terms of tissue distribution, expressed in muscle, heart, kidney and liver but barely detectable in lung, pancreas and brain. In liver veins, expressed in hepatic vein, extrahepatic portal vein and intrahepatic portal vein.

This is an uncharacterized protein from Homo sapiens (Human).